Reading from the N-terminus, the 1088-residue chain is RNA-directed RNA polymerase (1088 aa).

The RdRp catalytic domain maps to 501–687 (LSYGDVTRFL…AKRYIAGGKI (187 aa)).

Belongs to the reoviridae RNA-directed RNA polymerase family. In terms of assembly, interacts with VP3 (Potential). Interacts with VP2; this interaction activates VP1. Interacts with NSP5; this interaction is probably necessary for the formation of functional virus factories. Interacts with NSP2; this interaction is weak. Mg(2+) is required as a cofactor.

Its subcellular location is the virion. The enzyme catalyses RNA(n) + a ribonucleoside 5'-triphosphate = RNA(n+1) + diphosphate. Its function is as follows. RNA-directed RNA polymerase that is involved in both transcription and genome replication. Together with VP3 capping enzyme, forms an enzyme complex positioned near the channels situated at each of the five-fold vertices of the core. Following infection, the outermost layer of the virus is lost, leaving a double-layered particle (DLP) made up of the core and VP6 shell. VP1 then catalyzes the transcription of fully conservative plus-strand genomic RNAs that are extruded through the DLP's channels into the cytoplasm where they function as mRNAs for translation of viral proteins. One copy of each of the viral (+)RNAs is also recruited during core assembly, together with newly synthesized polymerase complexes and VP2. The polymerase of these novo-formed particles catalyzes the synthesis of complementary minus-strands leading to dsRNA formation. To do so, the polymerase specifically recognizes and binds 4 bases 5'-UGUG-3' in the conserved 3'-sequence of plus-strand RNA templates. VP2 presumably activates the autoinhibited VP1-RNA complex to coordinate packaging and genome replication. Once dsRNA synthesis is complete, the polymerase switches to the transcriptional mode, thus providing secondary transcription. This Rotavirus A (isolate RVA/Human/United States/WI61/1983/G9P1A[8]) (RV-A) protein is RNA-directed RNA polymerase.